Reading from the N-terminus, the 97-residue chain is Conotoxin Cal6.1b (97 aa).

An N-terminal signal peptide occupies residues 1 to 22 (MKLTTVLVVALLVLAACQFTVT). The disordered stretch occupies residues 22-46 (TDNSGDDPENPSLRSAGENQNPDST). The propeptide occupies 23–68 (DNSGDDPENPSLRSAGENQNPDSTKTITAWATRDMTNMRRGLNRPS). Cystine bridges form between C71-C87, C78-C91, and C86-C96.

The protein belongs to the conotoxin O1 superfamily. As to expression, expressed by the venom duct.

It is found in the secreted. In terms of biological role, probable neurotoxin with unknown target. Possibly targets ion channels. The sequence is that of Conotoxin Cal6.1b from Californiconus californicus (California cone).